Consider the following 520-residue polypeptide: F-box/LRR-repeat protein At3g59200 (520 aa).

The F-box domain maps to 6–54 (RDRISSLPNPVVSHILSFLPTKEAASTSVLSKKWRYLFAYVTNLDFDDS). LRR repeat units follow at residues 170 to 197 (CVDVQERGFGFVKLLSGCPVLEELVLMN), 219 to 244 (FCEETYENPKSVSFDTPNLVYLEYSD), and 340 to 365 (NSEIRWDSLPGLLKNCPNLETLVLKR).

This is F-box/LRR-repeat protein At3g59200 from Arabidopsis thaliana (Mouse-ear cress).